A 56-amino-acid polypeptide reads, in one-letter code: Large ribosomal subunit protein bL33 (56 aa).

This sequence belongs to the bacterial ribosomal protein bL33 family.

The polypeptide is Large ribosomal subunit protein bL33 (Rickettsia typhi (strain ATCC VR-144 / Wilmington)).